The sequence spans 356 residues: D-alanine--D-alanine ligase (356 aa).

The ATP-grasp domain maps to Lys134–Asp339. Lys167–Glu222 provides a ligand contact to ATP. Residues Asp293, Glu306, and Asn308 each contribute to the Mg(2+) site.

This sequence belongs to the D-alanine--D-alanine ligase family. Mg(2+) serves as cofactor. Mn(2+) is required as a cofactor.

Its subcellular location is the cytoplasm. It catalyses the reaction 2 D-alanine + ATP = D-alanyl-D-alanine + ADP + phosphate + H(+). It participates in cell wall biogenesis; peptidoglycan biosynthesis. Cell wall formation. The chain is D-alanine--D-alanine ligase from Staphylococcus haemolyticus (strain JCSC1435).